Consider the following 173-residue polypeptide: NADH-ubiquinone oxidoreductase chain 6 (173 aa).

5 helical membrane-spanning segments follow: residues 1-21 (MTYV…AVAS), 25-45 (PYFG…VLIW), 53-73 (LVLF…SAAL), 82-102 (LGSW…FGIL), and 142-162 (GVLL…LELV).

The protein belongs to the complex I subunit 6 family.

The protein localises to the mitochondrion membrane. The catalysed reaction is a ubiquinone + NADH + 5 H(+)(in) = a ubiquinol + NAD(+) + 4 H(+)(out). Its function is as follows. Core subunit of the mitochondrial membrane respiratory chain NADH dehydrogenase (Complex I) that is believed to belong to the minimal assembly required for catalysis. Complex I functions in the transfer of electrons from NADH to the respiratory chain. The immediate electron acceptor for the enzyme is believed to be ubiquinone. This is NADH-ubiquinone oxidoreductase chain 6 (MT-ND6) from Tetraodon nigroviridis (Spotted green pufferfish).